The primary structure comprises 264 residues: MTNPAPSDALVIAGKHYRSRLLTGTGKFKDLDETRLATEAAAAEIVTVAIRRVNIGQDPNAPSLLDVLPPERYTLLPNTAGCYTAEEAVRTCRLARELLDGHNLTKLEVLGDEKTLYPDVVQTLKAAEQLVADGFEVMVYTSDDPILAKRLEEIGCVAVMPLAAPIGSGLGIQNKYNLLEIIDNAKVPIIVDAGVGTASDAAIAMELGCDGVLMNTAIAGARDPILMASAMRKAIEAGREAFLAGRIPRKRYASASSPVDGVIG.

Catalysis depends on Lys106, which acts as the Schiff-base intermediate with DXP. 1-deoxy-D-xylulose 5-phosphate-binding positions include Gly167, 193-194 (AG), and 215-216 (NT).

Belongs to the ThiG family. In terms of assembly, homotetramer. Forms heterodimers with either ThiH or ThiS.

It is found in the cytoplasm. The enzyme catalyses [ThiS sulfur-carrier protein]-C-terminal-Gly-aminoethanethioate + 2-iminoacetate + 1-deoxy-D-xylulose 5-phosphate = [ThiS sulfur-carrier protein]-C-terminal Gly-Gly + 2-[(2R,5Z)-2-carboxy-4-methylthiazol-5(2H)-ylidene]ethyl phosphate + 2 H2O + H(+). It functions in the pathway cofactor biosynthesis; thiamine diphosphate biosynthesis. Catalyzes the rearrangement of 1-deoxy-D-xylulose 5-phosphate (DXP) to produce the thiazole phosphate moiety of thiamine. Sulfur is provided by the thiocarboxylate moiety of the carrier protein ThiS. In vitro, sulfur can be provided by H(2)S. This chain is Thiazole synthase, found in Xanthomonas euvesicatoria pv. vesicatoria (strain 85-10) (Xanthomonas campestris pv. vesicatoria).